A 155-amino-acid polypeptide reads, in one-letter code: Small ribosomal subunit protein uS7 (155 aa).

The protein belongs to the universal ribosomal protein uS7 family. Part of the 30S ribosomal subunit. Contacts proteins S9 and S11.

Functionally, one of the primary rRNA binding proteins, it binds directly to 16S rRNA where it nucleates assembly of the head domain of the 30S subunit. Is located at the subunit interface close to the decoding center, probably blocks exit of the E-site tRNA. In Chlorobium phaeobacteroides (strain DSM 266 / SMG 266 / 2430), this protein is Small ribosomal subunit protein uS7.